The chain runs to 318 residues: MKIALVIFITLALAGCALLSLHMGVIPVPWRALLTDWQAGHEHYYVLMEYRLPRLLLALFVGAALAVAGVLIQGIVRNPLASPDILGVNHAASLASVGALLLMPSLPVMVLPLLAFAGGMAGLILLKMLAKTHQPMKLALTGVALSACWASLTDYLMLSRPQDVNNALLWLTGSLWGRDWSFVKIAIPLMILFLPLSLSFCRDLDLLALGDARATTLGVSVPHTRFWALLLAVAMTSTGVAACGPISFIGLVVPHMMRSITGGRHRRLLPVSALTGALLLVVADLLARIIHPPLELPVGVLTAIIGAPWFVWLLVRMR.

The Cytoplasmic segment spans residues 1-2 (MK). The chain crosses the membrane as a helical span at residues 3 to 23 (IALVIFITLALAGCALLSLHM). The Periplasmic segment spans residues 24–55 (GVIPVPWRALLTDWQAGHEHYYVLMEYRLPRL). Residues 56-76 (LLALFVGAALAVAGVLIQGIV) form a helical membrane-spanning segment. The Cytoplasmic portion of the chain corresponds to 77–105 (RNPLASPDILGVNHAASLASVGALLLMPS). Residues 106–126 (LPVMVLPLLAFAGGMAGLILL) form a helical membrane-spanning segment. Residues 127–137 (KMLAKTHQPMK) lie on the Periplasmic side of the membrane. Residues 138–158 (LALTGVALSACWASLTDYLML) form a helical membrane-spanning segment. Residues 159–179 (SRPQDVNNALLWLTGSLWGRD) lie on the Cytoplasmic side of the membrane. A helical membrane pass occupies residues 180-200 (WSFVKIAIPLMILFLPLSLSF). Residues 201 to 225 (CRDLDLLALGDARATTLGVSVPHTR) are Periplasmic-facing. A helical transmembrane segment spans residues 226 to 246 (FWALLLAVAMTSTGVAACGPI). The Cytoplasmic portion of the chain corresponds to 247–269 (SFIGLVVPHMMRSITGGRHRRLL). Residues 270 to 290 (PVSALTGALLLVVADLLARII) form a helical membrane-spanning segment. The Periplasmic segment spans residues 291-294 (HPPL). A helical transmembrane segment spans residues 295 to 315 (ELPVGVLTAIIGAPWFVWLLV). Residues 316 to 318 (RMR) are Cytoplasmic-facing.

The protein belongs to the binding-protein-dependent transport system permease family. FecCD subfamily. The complex is composed of two ATP-binding proteins (FecE), two transmembrane proteins (FecC and FecD) and a solute-binding protein (FecB). Interacts with FecB.

The protein resides in the cell inner membrane. Part of the ABC transporter complex FecBCDE involved in citrate-dependent Fe(3+) uptake. Probably responsible for the translocation of the substrate across the membrane. In Escherichia coli (strain K12), this protein is Fe(3+) dicitrate transport system permease protein FecD.